The sequence spans 449 residues: UDP-N-acetylmuramate--L-alanine ligase (449 aa).

118–124 (GTHGKTT) provides a ligand contact to ATP.

It belongs to the MurCDEF family.

The protein localises to the cytoplasm. It carries out the reaction UDP-N-acetyl-alpha-D-muramate + L-alanine + ATP = UDP-N-acetyl-alpha-D-muramoyl-L-alanine + ADP + phosphate + H(+). It participates in cell wall biogenesis; peptidoglycan biosynthesis. Functionally, cell wall formation. This chain is UDP-N-acetylmuramate--L-alanine ligase, found in Flavobacterium johnsoniae (strain ATCC 17061 / DSM 2064 / JCM 8514 / BCRC 14874 / CCUG 350202 / NBRC 14942 / NCIMB 11054 / UW101) (Cytophaga johnsonae).